A 197-amino-acid polypeptide reads, in one-letter code: Holliday junction branch migration complex subunit RuvA (197 aa).

The tract at residues 1-64 (MYEYIKGKYI…EDFIGVYGFL (64 aa)) is domain I. The tract at residues 65 to 143 (TKDELSMFKL…IDILEEDDEQ (79 aa)) is domain II. Residues 144–148 (TINKV) are flexible linker. The tract at residues 149-197 (TDDKKVLEAVAALITLGYSEKEANKVINSCDKNNSLEQIIKEALKYLMK) is domain III.

The protein belongs to the RuvA family. Homotetramer. Forms an RuvA(8)-RuvB(12)-Holliday junction (HJ) complex. HJ DNA is sandwiched between 2 RuvA tetramers; dsDNA enters through RuvA and exits via RuvB. An RuvB hexamer assembles on each DNA strand where it exits the tetramer. Each RuvB hexamer is contacted by two RuvA subunits (via domain III) on 2 adjacent RuvB subunits; this complex drives branch migration. In the full resolvosome a probable DNA-RuvA(4)-RuvB(12)-RuvC(2) complex forms which resolves the HJ.

It is found in the cytoplasm. The RuvA-RuvB-RuvC complex processes Holliday junction (HJ) DNA during genetic recombination and DNA repair, while the RuvA-RuvB complex plays an important role in the rescue of blocked DNA replication forks via replication fork reversal (RFR). RuvA specifically binds to HJ cruciform DNA, conferring on it an open structure. The RuvB hexamer acts as an ATP-dependent pump, pulling dsDNA into and through the RuvAB complex. HJ branch migration allows RuvC to scan DNA until it finds its consensus sequence, where it cleaves and resolves the cruciform DNA. The polypeptide is Holliday junction branch migration complex subunit RuvA (Clostridium botulinum (strain 657 / Type Ba4)).